The chain runs to 464 residues: Maturase K (464 aa).

It belongs to the intron maturase 2 family. MatK subfamily.

The protein resides in the plastid. It is found in the chloroplast. Functionally, usually encoded in the trnK tRNA gene intron. Probably assists in splicing its own and other chloroplast group II introns. This Castanea crenata (Japanese chestnut) protein is Maturase K.